Reading from the N-terminus, the 323-residue chain is Elongation factor P--(R)-beta-lysine ligase (323 aa).

A substrate-binding site is contributed by serine 74–glutamate 76. Residues arginine 98–glutamate 100 and asparagine 107 each bind ATP. Tyrosine 116 provides a ligand contact to substrate. An ATP-binding site is contributed by glutamate 242–leucine 243. Glutamate 249 is a substrate binding site. Position 298 (glycine 298) interacts with ATP.

The protein belongs to the class-II aminoacyl-tRNA synthetase family. EpmA subfamily. As to quaternary structure, homodimer.

The catalysed reaction is D-beta-lysine + L-lysyl-[protein] + ATP = N(6)-((3R)-3,6-diaminohexanoyl)-L-lysyl-[protein] + AMP + diphosphate + H(+). In terms of biological role, with EpmB is involved in the beta-lysylation step of the post-translational modification of translation elongation factor P (EF-P). Catalyzes the ATP-dependent activation of (R)-beta-lysine produced by EpmB, forming a lysyl-adenylate, from which the beta-lysyl moiety is then transferred to the epsilon-amino group of a conserved specific lysine residue in EF-P. This chain is Elongation factor P--(R)-beta-lysine ligase, found in Vibrio atlanticus (strain LGP32) (Vibrio splendidus (strain Mel32)).